The sequence spans 148 residues: Large ribosomal subunit protein bL9 (148 aa).

This sequence belongs to the bacterial ribosomal protein bL9 family.

Its function is as follows. Binds to the 23S rRNA. The sequence is that of Large ribosomal subunit protein bL9 from Stutzerimonas stutzeri (strain A1501) (Pseudomonas stutzeri).